Here is a 347-residue protein sequence, read N- to C-terminus: MAQHRTLAHPFQFSLRWLSPLLPGILICAAVSCAAILAERFQVRIAGHAWLGDLVLAILIGTLLRSLVSLPVVASAGIKFSAKTLLEIAVALLGASLSLSILKGAGGLLIGGIALIVALSLVFSYAAGRMLGLPPKLATLIACGNSICGNSAIAAAAPAIGAKPEDVAASIAFTAVLGVVAVLLMPFLPQLLGLDATQYGIFAGLTVYAVPQVLAATAPLGAVAVQTGTIVKLIRVLMLGPVIATLSVIHGQSGKGRLKLQQMVPWFIIGFVLMIMARSFGLIPEALLSPVASLSNILTIMSMAALGLSVDIRSLRHAGGKVIIAASLSLVLLGVLSFGLILLTQAA.

The next 10 membrane-spanning stretches (helical) occupy residues 15-37 (LRWL…AAIL), 50-72 (WLGD…SLPV), 105-127 (AGGL…SYAA), 140-162 (LIAC…AIGA), 172-194 (AFTA…LLGL), 201-223 (IFAG…LGAV), 233-250 (LIRV…SVIH), 263-282 (MVPW…SFGL), 287-309 (LLSP…LGLS), and 322-344 (VIIA…ILLT).

This sequence belongs to the UPF0324 family.

It is found in the cell membrane. The polypeptide is UPF0324 membrane protein Atu0671 (Agrobacterium fabrum (strain C58 / ATCC 33970) (Agrobacterium tumefaciens (strain C58))).